The following is an 884-amino-acid chain: Lon protease homolog 2, peroxisomal (884 aa).

The Lon N-terminal domain maps to 12–255 (LAILPFRNKV…KATELVDRHL (244 aa)). Residues 67-101 (SLLSPGVGSDSGEGGSKAPGGSAGESTKQDTKNGK) form a disordered region. Over residues 75 to 89 (SDSGEGGSKAPGGSA) the composition is skewed to gly residues. Residue 408–415 (GPPGVGKT) participates in ATP binding. The 186-residue stretch at 689-874 (VASPGVSVGL…EEVLDHAFEG (186 aa)) folds into the Lon proteolytic domain. Active-site residues include Ser-780 and Lys-823. The Microbody targeting signal signature appears at 882–884 (SKL).

This sequence belongs to the peptidase S16 family. As to expression, expressed in roots, leaves and panicles.

The protein localises to the peroxisome matrix. It carries out the reaction Hydrolysis of proteins in presence of ATP.. In terms of biological role, ATP-dependent serine protease that mediates the selective degradation of misfolded and unassembled polypeptides in the peroxisomal matrix. Necessary for type 2 peroxisome targeting signal (PTS2)-containing protein processing and facilitates peroxisome matrix protein import. The chain is Lon protease homolog 2, peroxisomal (LON1) from Oryza sativa subsp. indica (Rice).